A 627-amino-acid polypeptide reads, in one-letter code: (-)-alpha-pinene synthase 2, chloroplastic (627 aa).

Residues 1–36 constitute a chloroplast transit peptide; it reads MALVSVAPMASRSCLHKSLSSSAHELKTICRTIPTL. Residues aspartate 378, aspartate 382, and aspartate 530 each coordinate Mg(2+). Residues 378 to 382 carry the DDXXD motif motif; the sequence is DDMYD.

Belongs to the terpene synthase family. Tpsd subfamily. It depends on Mg(2+) as a cofactor. Requires Mn(2+) as cofactor.

It is found in the plastid. The protein localises to the chloroplast. The enzyme catalyses (2E)-geranyl diphosphate = (1S,5S)-alpha-pinene + diphosphate. It catalyses the reaction (2E)-geranyl diphosphate = (1S,5S)-beta-pinene + diphosphate. Its pathway is terpene metabolism; oleoresin biosynthesis. Functionally, involved in defensive oleoresin formation in conifers in response to insect attack or other injury. Involved in monoterpene (C10) olefins biosynthesis. A mixture of alpha- and beta-pinene (35:10) is produced by this enzyme. The protein is (-)-alpha-pinene synthase 2, chloroplastic of Picea sitchensis (Sitka spruce).